Reading from the N-terminus, the 500-residue chain is uncharacterized protein (500 aa).

The chain crosses the membrane as a helical span at residues 27–47 (IFALILIVFGFIIAPLLPGIF).

Its subcellular location is the membrane. This is an uncharacterized protein from Borreliella burgdorferi (strain ATCC 35210 / DSM 4680 / CIP 102532 / B31) (Borrelia burgdorferi).